Reading from the N-terminus, the 203-residue chain is Probable flagellin 1 (203 aa).

A propeptide spanning residues Met-1–Gly-6 is cleaved from the precursor.

The protein belongs to the archaeal flagellin family.

The protein localises to the archaeal flagellum. Its function is as follows. Flagellin is the subunit protein which polymerizes to form the filaments of archaeal flagella. The protein is Probable flagellin 1 (flaB1) of Aeropyrum pernix (strain ATCC 700893 / DSM 11879 / JCM 9820 / NBRC 100138 / K1).